Consider the following 773-residue polypeptide: Mitogen-activated protein kinase kinase kinase 9 (773 aa).

The span at Met-1–Asp-14 shows a compositional bias: basic and acidic residues. Residues Met-1 to Ser-35 are disordered. Positions Ser-21–Ser-35 are enriched in low complexity. Residues Ser-79 and Ser-150 each carry the phosphoserine modification. Residues Phe-100–Ser-493 are regulatory region. Ser-365 is modified (phosphoserine; by MAPK4). A disordered region spans residues Glu-426–Glu-455. The segment covering Gly-440–Asp-449 has biased composition (acidic residues). Residues Trp-501–Val-755 form the Protein kinase domain. ATP-binding positions include Leu-507–Val-515 and Lys-529. The active-site Proton acceptor is Asp-624. The residue at position 768 (Ser-768) is a Phosphoserine.

This sequence belongs to the protein kinase superfamily. STE Ser/Thr protein kinase family. MAP kinase kinase kinase subfamily. In terms of assembly, interacts with MPK4. Phosphorylated by MPK4 upon treatment with flg22. As to expression, expressed at least in rosette leaves (at protein level).

The enzyme catalyses L-seryl-[protein] + ATP = O-phospho-L-seryl-[protein] + ADP + H(+). It carries out the reaction L-threonyl-[protein] + ATP = O-phospho-L-threonyl-[protein] + ADP + H(+). Functionally, triggers SUMM2-mediated immune responses, including cell death and defense responses. Probably inhibited by the MEKK1-MKK1/ MKK2-MPK4 kinase cascade to adjust plant defense. Seems to contribute in transducing external glutamate (L-Glu) signal that elicits large-scale changes in root architecture. This is Mitogen-activated protein kinase kinase kinase 9 from Arabidopsis thaliana (Mouse-ear cress).